The following is a 530-amino-acid chain: Inactive ubiquitin carboxyl-terminal hydrolase 17-like protein 8 (530 aa).

One can recognise a USP domain in the interval Ala80 to Lys375. Residues Ser382–Arg392 show a composition bias toward basic and acidic residues. Disordered stretches follow at residues Ser382–His412 and Asn493–Gln530. Over residues Thr495–Gly510 the composition is skewed to polar residues. The span at Arg511 to Arg524 shows a compositional bias: basic residues.

The protein belongs to the peptidase C19 family. USP17 subfamily.

The protein resides in the nucleus. The protein localises to the endoplasmic reticulum. This Homo sapiens (Human) protein is Inactive ubiquitin carboxyl-terminal hydrolase 17-like protein 8 (USP17L8).